Here is a 926-residue protein sequence, read N- to C-terminus: UvrABC system protein A (926 aa).

ATP is bound at residue Gly-31–Ser-38. A C4-type zinc finger spans residues Cys-251 to Cys-278. ABC transporter domains are found at residues Ser-308–Leu-568 and Pro-588–Arg-916. Gly-620–Ser-627 provides a ligand contact to ATP. The C4-type zinc finger occupies Cys-719–Cys-745.

Belongs to the ABC transporter superfamily. UvrA family. Forms a heterotetramer with UvrB during the search for lesions.

It localises to the cytoplasm. The UvrABC repair system catalyzes the recognition and processing of DNA lesions. UvrA is an ATPase and a DNA-binding protein. A damage recognition complex composed of 2 UvrA and 2 UvrB subunits scans DNA for abnormalities. When the presence of a lesion has been verified by UvrB, the UvrA molecules dissociate. The polypeptide is UvrABC system protein A (Aquifex aeolicus (strain VF5)).